We begin with the raw amino-acid sequence, 243 residues long: Urease accessory protein UreF (243 aa).

This sequence belongs to the UreF family. As to quaternary structure, ureD, UreF and UreG form a complex that acts as a GTP-hydrolysis-dependent molecular chaperone, activating the urease apoprotein by helping to assemble the nickel containing metallocenter of UreC. The UreE protein probably delivers the nickel.

It localises to the cytoplasm. In terms of biological role, required for maturation of urease via the functional incorporation of the urease nickel metallocenter. This Xanthobacter autotrophicus (strain ATCC BAA-1158 / Py2) protein is Urease accessory protein UreF.